Here is a 551-residue protein sequence, read N- to C-terminus: Adenylosuccinate synthetase (551 aa).

GTP is bound by residues 131-137 and 159-161; these read GDEGKGK and GHT. Asp-132 serves as the catalytic Proton acceptor. Asp-132 and Gly-159 together coordinate Mg(2+). Residues 132–135, 157–160, Thr-248, Arg-262, Asn-339, Thr-354, and Arg-418 contribute to the IMP site; these read DEGK and NAGH. His-160 (proton donor) is an active-site residue. Residue 414–420 coordinates substrate; that stretch reads TTTGRAR. Residues Arg-420, 446-448, and 528-530 contribute to the GTP site; these read KLD and GVG.

This sequence belongs to the adenylosuccinate synthetase family. Homodimer. The cofactor is Mg(2+).

It is found in the cytoplasm. It catalyses the reaction IMP + L-aspartate + GTP = N(6)-(1,2-dicarboxyethyl)-AMP + GDP + phosphate + 2 H(+). It participates in purine metabolism; AMP biosynthesis via de novo pathway; AMP from IMP: step 1/2. Functionally, plays an important role in the de novo pathway and in the salvage pathway of purine nucleotide biosynthesis. Catalyzes the first committed step in the biosynthesis of AMP from IMP. The chain is Adenylosuccinate synthetase from Phytophthora infestans (strain T30-4) (Potato late blight agent).